Reading from the N-terminus, the 528-residue chain is Aurora kinase (528 aa).

Disordered regions lie at residues 1-35 (MMLP…SLFQ) and 48-235 (ISKP…KPQQ). 2 stretches are compositionally biased toward low complexity: residues 18 to 29 (NNNNSNNNNNNN) and 59 to 94 (HSHT…PNLN). Residues 95–104 (TSLVFTPTKN) show a composition bias toward polar residues. Residues 105–120 (SSSSSSSHSSSLLSSS) are compositionally biased toward low complexity. A compositionally biased stretch (polar residues) spans 129–155 (QPESNHTRATSHYRTTSTSQYKSSANK). Low complexity predominate over residues 185–230 (TTTATQNTNNNKILNPSLSSSTIRFSTVSSSTSSSTTSSSSSSHTS). The 274-residue stretch at 242–515 (FEFGKILGKG…LKEVLNHNWI (274 aa)) folds into the Protein kinase domain. ATP is bound by residues 248–256 (LGKGKLGRV) and lysine 271. Residue aspartate 365 is the Proton acceptor of the active site.

This sequence belongs to the protein kinase superfamily. Ser/Thr protein kinase family. Aurora subfamily.

The protein localises to the nucleus. Its subcellular location is the cytoplasm. It is found in the cytoskeleton. It localises to the spindle. The protein resides in the chromosome. The protein localises to the centromere. Its subcellular location is the kinetochore. It carries out the reaction L-seryl-[protein] + ATP = O-phospho-L-seryl-[protein] + ADP + H(+). The catalysed reaction is L-threonyl-[protein] + ATP = O-phospho-L-threonyl-[protein] + ADP + H(+). Functionally, component of the chromosomal passenger complex (CPC), a complex that acts as a key regulator of chromosome segregation and cytokinesis. Has a role in error-correction of aberrent kinetochore-microtubule attachments to ensure that sister kinetochores become bioriented and connect to opposite poles by promoting spindle assembly checkpoint signaling. The polypeptide is Aurora kinase (IPL1) (Candida albicans (strain SC5314 / ATCC MYA-2876) (Yeast)).